A 455-amino-acid polypeptide reads, in one-letter code: Bifunctional protein GlmU (455 aa).

The interval Met1–Arg227 is pyrophosphorylase. Residues Leu8–Gly11, Lys22, Gln73, Gly78–Thr79, Tyr100–Asp102, Gly137, Glu152, Asn167, and Asn225 contribute to the UDP-N-acetyl-alpha-D-glucosamine site. Asp102 contacts Mg(2+). Asn225 contributes to the Mg(2+) binding site. A linker region spans residues Trp228 to Ala248. Positions Gly249–Glu455 are N-acetyltransferase. Positions 332 and 350 each coordinate UDP-N-acetyl-alpha-D-glucosamine. His362 serves as the catalytic Proton acceptor. UDP-N-acetyl-alpha-D-glucosamine-binding residues include Tyr365 and Asn376. Acetyl-CoA contacts are provided by residues Ala379, Asn385–Tyr386, Ser404, Ala422, and Arg439.

In the N-terminal section; belongs to the N-acetylglucosamine-1-phosphate uridyltransferase family. It in the C-terminal section; belongs to the transferase hexapeptide repeat family. In terms of assembly, homotrimer. The cofactor is Mg(2+).

It is found in the cytoplasm. The enzyme catalyses alpha-D-glucosamine 1-phosphate + acetyl-CoA = N-acetyl-alpha-D-glucosamine 1-phosphate + CoA + H(+). The catalysed reaction is N-acetyl-alpha-D-glucosamine 1-phosphate + UTP + H(+) = UDP-N-acetyl-alpha-D-glucosamine + diphosphate. It participates in nucleotide-sugar biosynthesis; UDP-N-acetyl-alpha-D-glucosamine biosynthesis; N-acetyl-alpha-D-glucosamine 1-phosphate from alpha-D-glucosamine 6-phosphate (route II): step 2/2. The protein operates within nucleotide-sugar biosynthesis; UDP-N-acetyl-alpha-D-glucosamine biosynthesis; UDP-N-acetyl-alpha-D-glucosamine from N-acetyl-alpha-D-glucosamine 1-phosphate: step 1/1. Its pathway is bacterial outer membrane biogenesis; LPS lipid A biosynthesis. Catalyzes the last two sequential reactions in the de novo biosynthetic pathway for UDP-N-acetylglucosamine (UDP-GlcNAc). The C-terminal domain catalyzes the transfer of acetyl group from acetyl coenzyme A to glucosamine-1-phosphate (GlcN-1-P) to produce N-acetylglucosamine-1-phosphate (GlcNAc-1-P), which is converted into UDP-GlcNAc by the transfer of uridine 5-monophosphate (from uridine 5-triphosphate), a reaction catalyzed by the N-terminal domain. In Coxiella burnetii (strain Dugway 5J108-111), this protein is Bifunctional protein GlmU.